The following is a 274-amino-acid chain: Nitrogenase iron protein (274 aa).

8 to 15 (GKGGIGKS) contacts ATP. Cysteine 94 contacts [4Fe-4S] cluster. Arginine 97 bears the ADP-ribosylarginine; by dinitrogenase reductase ADP-ribosyltransferase mark. Cysteine 131 provides a ligand contact to [4Fe-4S] cluster.

Belongs to the NifH/BchL/ChlL family. Homodimer. The cofactor is [4Fe-4S] cluster. In terms of processing, the reversible ADP-ribosylation of Arg-97 inactivates the nitrogenase reductase and regulates nitrogenase activity.

The enzyme catalyses N2 + 8 reduced [2Fe-2S]-[ferredoxin] + 16 ATP + 16 H2O = H2 + 8 oxidized [2Fe-2S]-[ferredoxin] + 2 NH4(+) + 16 ADP + 16 phosphate + 6 H(+). The key enzymatic reactions in nitrogen fixation are catalyzed by the nitrogenase complex, which has 2 components: the iron protein and the molybdenum-iron protein. The polypeptide is Nitrogenase iron protein (Chlorobium chlorochromatii (strain CaD3)).